A 102-amino-acid polypeptide reads, in one-letter code: Small ribosomal subunit protein uS14 (102 aa).

This sequence belongs to the universal ribosomal protein uS14 family. As to quaternary structure, part of the 30S ribosomal subunit. Contacts proteins S3 and S10.

In terms of biological role, binds 16S rRNA, required for the assembly of 30S particles and may also be responsible for determining the conformation of the 16S rRNA at the A site. The sequence is that of Small ribosomal subunit protein uS14 from Wolbachia sp. subsp. Brugia malayi (strain TRS).